We begin with the raw amino-acid sequence, 209 residues long: Uracil phosphoribosyltransferase (209 aa).

5-phospho-alpha-D-ribose 1-diphosphate-binding positions include arginine 79, arginine 104, and 131-139; that span reads DPMLATGGS. Residues isoleucine 194 and 199 to 201 each bind uracil; that span reads GDA. Aspartate 200 lines the 5-phospho-alpha-D-ribose 1-diphosphate pocket.

Belongs to the UPRTase family. Mg(2+) serves as cofactor.

The enzyme catalyses UMP + diphosphate = 5-phospho-alpha-D-ribose 1-diphosphate + uracil. It participates in pyrimidine metabolism; UMP biosynthesis via salvage pathway; UMP from uracil: step 1/1. With respect to regulation, allosterically activated by GTP. Functionally, catalyzes the conversion of uracil and 5-phospho-alpha-D-ribose 1-diphosphate (PRPP) to UMP and diphosphate. The chain is Uracil phosphoribosyltransferase from Streptococcus pyogenes serotype M49 (strain NZ131).